We begin with the raw amino-acid sequence, 186 residues long: NADH-quinone oxidoreductase subunit B (186 aa).

4 residues coordinate [4Fe-4S] cluster: cysteine 44, cysteine 45, cysteine 110, and cysteine 139.

This sequence belongs to the complex I 20 kDa subunit family. As to quaternary structure, NDH-1 is composed of 14 different subunits. Subunits NuoB, C, D, E, F, and G constitute the peripheral sector of the complex. Requires [4Fe-4S] cluster as cofactor.

The protein resides in the cell inner membrane. It catalyses the reaction a quinone + NADH + 5 H(+)(in) = a quinol + NAD(+) + 4 H(+)(out). Functionally, NDH-1 shuttles electrons from NADH, via FMN and iron-sulfur (Fe-S) centers, to quinones in the respiratory chain. The immediate electron acceptor for the enzyme in this species is believed to be ubiquinone. Couples the redox reaction to proton translocation (for every two electrons transferred, four hydrogen ions are translocated across the cytoplasmic membrane), and thus conserves the redox energy in a proton gradient. This chain is NADH-quinone oxidoreductase subunit B, found in Leptospira borgpetersenii serovar Hardjo-bovis (strain JB197).